The chain runs to 349 residues: Histidinol-phosphate aminotransferase (349 aa).

The tract at residues 1–22 is disordered; that stretch reads MVSIRPSVRHTPAYVPGEQPQT. K207 carries the post-translational modification N6-(pyridoxal phosphate)lysine.

This sequence belongs to the class-II pyridoxal-phosphate-dependent aminotransferase family. Histidinol-phosphate aminotransferase subfamily. In terms of assembly, homodimer. Pyridoxal 5'-phosphate serves as cofactor.

The catalysed reaction is L-histidinol phosphate + 2-oxoglutarate = 3-(imidazol-4-yl)-2-oxopropyl phosphate + L-glutamate. It functions in the pathway amino-acid biosynthesis; L-histidine biosynthesis; L-histidine from 5-phospho-alpha-D-ribose 1-diphosphate: step 7/9. In Synechocystis sp. (strain ATCC 27184 / PCC 6803 / Kazusa), this protein is Histidinol-phosphate aminotransferase (hisC).